An 89-amino-acid polypeptide reads, in one-letter code: Small ribosomal subunit protein uS15 (89 aa).

This sequence belongs to the universal ribosomal protein uS15 family. As to quaternary structure, part of the 30S ribosomal subunit. Forms a bridge to the 50S subunit in the 70S ribosome, contacting the 23S rRNA.

Its function is as follows. One of the primary rRNA binding proteins, it binds directly to 16S rRNA where it helps nucleate assembly of the platform of the 30S subunit by binding and bridging several RNA helices of the 16S rRNA. Functionally, forms an intersubunit bridge (bridge B4) with the 23S rRNA of the 50S subunit in the ribosome. This Shouchella clausii (strain KSM-K16) (Alkalihalobacillus clausii) protein is Small ribosomal subunit protein uS15.